Reading from the N-terminus, the 312-residue chain is Serine/threonine-protein phosphatase PP2A catalytic subunit (312 aa).

Mn(2+)-binding residues include D60, H62, D88, and N120. H121 functions as the Proton donor in the catalytic mechanism. Residues H170 and H244 each coordinate Mn(2+).

This sequence belongs to the PPP phosphatase family. PP-2A subfamily. Mn(2+) is required as a cofactor.

The protein resides in the cytoplasm. The enzyme catalyses O-phospho-L-seryl-[protein] + H2O = L-seryl-[protein] + phosphate. It catalyses the reaction O-phospho-L-threonyl-[protein] + H2O = L-threonyl-[protein] + phosphate. This chain is Serine/threonine-protein phosphatase PP2A catalytic subunit, found in Nicotiana tabacum (Common tobacco).